We begin with the raw amino-acid sequence, 174 residues long: NADH-ubiquinone oxidoreductase chain 6 (174 aa).

5 consecutive transmembrane segments (helical) span residues 1–21 (MTYVLFTLSVMLVMGFVGFSS), 24–44 (SPIYGGLALVVSGVVGCMIIL), 47–67 (GGAYLGLVMFLIYLGGMMVVF), 86–106 (FEVLACFLVGLMMEVGLVLWV), and 151–171 (WLVVVAGWTLFVGVYVVIEIT).

It belongs to the complex I subunit 6 family. In terms of assembly, core subunit of respiratory chain NADH dehydrogenase (Complex I) which is composed of 45 different subunits.

It is found in the mitochondrion inner membrane. It catalyses the reaction a ubiquinone + NADH + 5 H(+)(in) = a ubiquinol + NAD(+) + 4 H(+)(out). Functionally, core subunit of the mitochondrial membrane respiratory chain NADH dehydrogenase (Complex I) which catalyzes electron transfer from NADH through the respiratory chain, using ubiquinone as an electron acceptor. Essential for the catalytic activity and assembly of complex I. This chain is NADH-ubiquinone oxidoreductase chain 6 (MT-ND6), found in Papio hamadryas (Hamadryas baboon).